Here is a 159-residue protein sequence, read N- to C-terminus: MKPIAIYPGTFDPLTNGHVDIIERALPLFNKIIVACAPTSRKDPHLKLEERVNLIADVLTDERVEVLPLTGLLVDFAKTHQANFILRGLRAVSDFDYEFQLAHMNYQLSPEIETIFLPAREGYSYVSGTMVREIVTLGGDVSPFVPPLVARHLQKRREK.

Position 10 (Thr-10) interacts with substrate. ATP-binding positions include 10 to 11 (TF) and His-18. Substrate-binding residues include Lys-42, Leu-73, and Arg-87. ATP is bound by residues 88–90 (GLR), Glu-98, and 123–129 (YSYVSGT).

This sequence belongs to the bacterial CoaD family. Homohexamer. It depends on Mg(2+) as a cofactor.

It localises to the cytoplasm. The catalysed reaction is (R)-4'-phosphopantetheine + ATP + H(+) = 3'-dephospho-CoA + diphosphate. Its pathway is cofactor biosynthesis; coenzyme A biosynthesis; CoA from (R)-pantothenate: step 4/5. Reversibly transfers an adenylyl group from ATP to 4'-phosphopantetheine, yielding dephospho-CoA (dPCoA) and pyrophosphate. The sequence is that of Phosphopantetheine adenylyltransferase from Coxiella burnetii (strain CbuK_Q154) (Coxiella burnetii (strain Q154)).